Consider the following 420-residue polypeptide: Histidine--tRNA ligase (420 aa).

The protein belongs to the class-II aminoacyl-tRNA synthetase family. As to quaternary structure, homodimer.

It is found in the cytoplasm. It catalyses the reaction tRNA(His) + L-histidine + ATP = L-histidyl-tRNA(His) + AMP + diphosphate + H(+). The chain is Histidine--tRNA ligase from Desulforudis audaxviator (strain MP104C).